We begin with the raw amino-acid sequence, 699 residues long: Chitinase A1 (699 aa).

The first 41 residues, 1–41 (MINLNKHTAFKKTAKFFLGLSLLLSVIVPSFALQPATAEAA), serve as a signal peptide directing secretion. The region spanning 44-454 (YKIVGYYPSW…NKLKADLPTG (411 aa)) is the GH18 domain. Chitin contacts are provided by residues 135 to 136 (DQ) and 162 to 165 (GGWT). The active-site Proton donor is glutamate 204. Chitin is bound by residues tyrosine 205, 277–280 (MTYD), and tryptophan 433. Residues 449–471 (ADLPTGGTVPPVDTTAPSVPGNA) form a disordered region. A compositionally biased stretch (low complexity) spans 452 to 465 (PTGGTVPPVDTTAP). Fibronectin type-III domains are found at residues 467–553 (VPGN…TAQP) and 562–647 (APTN…TAAE).

It belongs to the glycosyl hydrolase 18 family. Chitinase class II subfamily.

The catalysed reaction is Random endo-hydrolysis of N-acetyl-beta-D-glucosaminide (1-&gt;4)-beta-linkages in chitin and chitodextrins.. This chain is Chitinase A1 (chiA1), found in Niallia circulans (Bacillus circulans).